The sequence spans 341 residues: Methionine import ATP-binding protein MetN 3 (341 aa).

The ABC transporter domain maps to 2–241; it reads ILLENVKKIY…PQQDITKRFV (240 aa). 38–45 contacts ATP; that stretch reads GYSGAGKS.

Belongs to the ABC transporter superfamily. Methionine importer (TC 3.A.1.24) family. As to quaternary structure, the complex is composed of two ATP-binding proteins (MetN), two transmembrane proteins (MetI) and a solute-binding protein (MetQ).

Its subcellular location is the cell membrane. The enzyme catalyses L-methionine(out) + ATP + H2O = L-methionine(in) + ADP + phosphate + H(+). It carries out the reaction D-methionine(out) + ATP + H2O = D-methionine(in) + ADP + phosphate + H(+). Functionally, part of the ABC transporter complex MetNIQ involved in methionine import. Responsible for energy coupling to the transport system. The polypeptide is Methionine import ATP-binding protein MetN 3 (Bacillus cereus (strain ATCC 10987 / NRS 248)).